The chain runs to 519 residues: MTMQTITAVSGNDDAATHGAAAPPGGALLSLDGITVTFPGVRALDAVSLSVRAGEVHGLMGENGAGKSTLLKVLSGVNQPQAGTLTLNGTVQRFASTRAALEAGIAIIYQELHLVPELTVAENLMLGQLPSRLGVVDERALAVRALDALERLGEHIDPDIPVKYLSIGQRQMIEIGKALMRDARVIAFDEPTSSLSARETTQLFRIIRSLRAEGRAIIYVTHRMEEVDALCDRVTVFRDGRRIETFESVAELDRDQLIGCMVGRSIEDVYGYRPRAAGDVMIEAKGLTGPGLSEPVSFAARRGEIVGFFGLVGAGRSELMKLLYGATRPSGGHVELGGKRVAFSSPRHAVRAGIALCPEDRKQEGIVAIASVADNLNISARRHFSPARVLLDARRERDLAQRYIERLAIKTPDGDTPIGALSGGNQQKVVLARWLAERIDVFLMDEPTRGIDVGARAEIYNLFYELAEAGRTVILVSSDLAEVIGVSDRIIVMKEGRIAGEVAKAQATPDALIKLALPR.

ABC transporter domains lie at 29–264 and 264–515; these read LSLD…MVGR and RSIE…LIKL. Position 61 to 68 (61 to 68) interacts with ATP; the sequence is GENGAGKS.

This sequence belongs to the ABC transporter superfamily. Arabinose importer (TC 3.A.1.2.2) family. The complex is composed of two ATP-binding proteins (AraG), two transmembrane proteins (AraH) and a solute-binding protein (AraF).

It is found in the cell inner membrane. It carries out the reaction L-arabinose(out) + ATP + H2O = L-arabinose(in) + ADP + phosphate + H(+). Part of the ABC transporter complex AraFGH involved in arabinose import. Responsible for energy coupling to the transport system. The polypeptide is Arabinose import ATP-binding protein AraG 2 (Burkholderia ambifaria (strain ATCC BAA-244 / DSM 16087 / CCUG 44356 / LMG 19182 / AMMD) (Burkholderia cepacia (strain AMMD))).